The primary structure comprises 223 residues: uncharacterized protein (223 aa).

5 consecutive transmembrane segments (helical) span residues L28 to T48, L59 to A79, A88 to I108, I128 to S148, and A176 to V196.

The protein localises to the cell membrane. This is an uncharacterized protein from Mycoplasma pneumoniae (strain ATCC 29342 / M129 / Subtype 1) (Mycoplasmoides pneumoniae).